The following is a 137-amino-acid chain: ALFAAAGLAAAAPFETRQDYASCPVSTQGDYVWKISEFSGRKPEGTYYNSLSFNIKATNEGTLDFTCSAQADKLEDDKFYPCGENSSMSFAFQSDRNGLLFRQDVSNDITYVATATLPNYCRAGGDGPKDVICQGAS.

A signal peptide spans 1 to 18 (ALFAAAGLAAAAPFETRQ). Residues 28–137 (QGDYVWKISE…PKDVICQGAS (110 aa)) enclose the AA1-like domain. 2 disulfide bridges follow: Cys67/Cys82 and Cys121/Cys133.

Belongs to the ALTA1 family. Homodimer; disulfide-linked.

The protein localises to the secreted. The chain is Allergen Ste b 1 (alta1) from Stemphylium botryosum (Black stalk rot fungus).